The following is a 1822-amino-acid chain: Signal-induced proliferation-associated 1-like protein 1 (1822 aa).

2 disordered regions span residues 1–30 (MTSLKRSQTERPVTADRASVVSTDGTPKVH) and 47–125 (GSSV…VSLN). Positions 84-94 (PPRKENVKESS) are enriched in basic and acidic residues. A compositionally biased stretch (low complexity) spans 95 to 125 (RSSQEIETSSCLESLSSKGSPVSQGSSVSLN). 6 positions are modified to phosphoserine: serine 162, serine 187, serine 193, serine 208, serine 255, and serine 288. A disordered region spans residues 277–297 (EREKPLKRRSKSETGDSSIFR). The 218-residue stretch at 638-855 (FMKLDEQGLN…RTRQEYLKDL (218 aa)) folds into the Rap-GAP domain. Residues 992–1068 (EMTLRRNGLG…VKVVIIPPHD (77 aa)) form the PDZ domain. Phosphoserine is present on residues serine 1117, serine 1126, serine 1155, serine 1166, serine 1188, serine 1209, and serine 1220. A disordered region spans residues 1134 to 1165 (AGKGDGKMPLPERAANIPRSISSDGRPLERRL). The interval 1183 to 1252 (SQCRNSPSNL…WQRSEDSLAD (70 aa)) is disordered. Residues 1188–1198 (SPSNLSSSSET) are compositionally biased toward low complexity. A compositionally biased stretch (polar residues) spans 1225 to 1244 (DRQNTQSDIGGSGKSTPSWQ). Phosphoserine is present on residues serine 1273 and serine 1288. The disordered stretch occupies residues 1286-1324 (HLSPNKQGHSDSHYSSHSSSNTLSSNASSAHSDEKWYDG). Residues 1300-1315 (SSHSSSNTLSSNASSA) show a composition bias toward low complexity. The residue at position 1344 (serine 1344) is a Phosphoserine; by PLK2. Threonine 1348 carries the phosphothreonine; by PLK2 modification. Residues 1358 to 1367 (TASLGASTSS) show a composition bias toward low complexity. The segment at 1358–1382 (TASLGASTSSPRSGPGKEKVAPLWH) is disordered. At serine 1367 the chain carries Phosphoserine; by CDK5. Serine 1384 carries the phosphoserine modification. Residues 1395 to 1407 (LETEGHGMDRKTE) show a composition bias toward basic and acidic residues. Residues 1395–1493 (LETEGHGMDR…SSSGPRTFYP (99 aa)) are disordered. 5 positions are modified to phosphoserine: serine 1408, serine 1409, serine 1430, serine 1449, and serine 1451. A compositionally biased stretch (polar residues) spans 1417 to 1436 (KSQGGSSPLTRENSTFSIND). Composition is skewed to low complexity over residues 1437–1451 (ATSHTSTMSSRHSAS) and 1471–1486 (SSQLAPSFSSSSSSSS). Phosphoserine is present on residues serine 1546 and serine 1567. Residues 1567-1595 (SPTPESQKNFKFHGLSSPQSPFPSTPTSR) are disordered. A Phosphothreonine modification is found at threonine 1569. A phosphoserine mark is found at serine 1572, serine 1583, serine 1586, serine 1603, and serine 1606. Arginine 1619 is subject to Asymmetric dimethylarginine. Serine 1621, serine 1665, serine 1668, serine 1726, serine 1729, serine 1746, serine 1747, and serine 1752 each carry phosphoserine. The stretch at 1753–1813 (PTLASKVDQL…ASDKLKKFTE (61 aa)) forms a coiled coil.

As to quaternary structure, interacts (via PDZ domain) with EPHA4 (via PDZ motif); controls neuronal morphology through regulation of the RAP1 (RAP1A or RAP1B) and RAP2 (RAP2A, RAP2B or RAP2C) GTPases. Interacts with DLG4, PDLIM5, PDLIM7 and LZTS3. Interacts with the actin cytoskeleton. Post-translationally, ubiquitinated and degraded by the SCF(BTRC) following phosphorylation by PLK2. Phosphorylated at Ser-1367 by CDK5, creating a docking site for the POLO box domains of PLK2. Subsequently, PLK2 binds and phosphorylates SIPA1L1, leading to ubiquitination and degradation by the proteasome. Detected in brain (at protein level).

It is found in the cytoplasm. The protein resides in the cytoskeleton. Its subcellular location is the postsynaptic density. It localises to the synapse. The protein localises to the synaptosome. Functionally, stimulates the GTPase activity of RAP2A. Promotes reorganization of the actin cytoskeleton and recruits DLG4 to F-actin. Contributes to the regulation of dendritic spine morphogenesis. This chain is Signal-induced proliferation-associated 1-like protein 1 (Sipa1l1), found in Rattus norvegicus (Rat).